A 547-amino-acid chain; its full sequence is Cilia- and flagella- associated protein 210 (547 aa).

Coiled coils occupy residues 50 to 131 (ERIR…RKKA), 183 to 251 (VKLN…MKKN), and 342 to 405 (IARD…KADK). Residues 214 to 237 (KQIEEHKEEEEARKKSEEKDAEEM) are disordered.

Microtubule inner protein component of sperm flagellar doublet microtubules.

It localises to the cytoplasm. The protein localises to the cytoskeleton. It is found in the cilium axoneme. The protein resides in the flagellum axoneme. Functionally, microtubule inner protein (MIP) part of the dynein-decorated doublet microtubules (DMTs) in cilia axoneme, which is required for motile cilia beating. This Mus musculus (Mouse) protein is Cilia- and flagella- associated protein 210 (Cfap210).